A 188-amino-acid chain; its full sequence is Ribosome-recycling factor (188 aa).

It belongs to the RRF family.

It localises to the cytoplasm. In terms of biological role, responsible for the release of ribosomes from messenger RNA at the termination of protein biosynthesis. May increase the efficiency of translation by recycling ribosomes from one round of translation to another. This Caulobacter sp. (strain K31) protein is Ribosome-recycling factor.